Consider the following 381-residue polypeptide: Alpha-methylacyl-CoA racemase (381 aa).

Substrate is bound by residues Arg-36 and 54–57 (LDLK). Residue Lys-57 is modified to N6-acetyllysine. Residues Lys-86 and Lys-100 each carry the N6-acetyllysine; alternate modification. An N6-succinyllysine; alternate mark is found at Lys-86 and Lys-100. Residue Lys-117 is modified to N6-acetyllysine. Residue 120–125 (GHDINY) coordinates substrate. Residue His-121 is the Proton acceptor of the active site. The active-site Proton donor is Asp-151. Residue Lys-267 is modified to N6-succinyllysine. Residues 316–344 (TDGEQLPSPRPAPLLSRTPAVPSAKRDPS) form a disordered region. The short motif at 379-381 (ANL) is the Microbody targeting signal element.

It belongs to the CoA-transferase III family. In terms of assembly, monomer.

Its subcellular location is the peroxisome. It is found in the mitochondrion. The enzyme catalyses a (2S)-2-methylacyl-CoA = a (2R)-2-methylacyl-CoA. It carries out the reaction (25R)-3alpha,7alpha,12alpha-trihydroxy-5beta-cholestan-26-oyl-CoA = (25S)-3alpha,7alpha,12alpha-trihydroxy-5beta-cholestan-26-oyl-CoA. The catalysed reaction is (2R,6)-dimethylheptanoyl-CoA = (2S,6)-dimethylheptanoyl-CoA. It participates in lipid metabolism; bile acid biosynthesis. The protein operates within lipid metabolism; fatty acid metabolism. Catalyzes the interconversion of (R)- and (S)-stereoisomers of alpha-methyl-branched-chain fatty acyl-CoA esters. Acts only on coenzyme A thioesters, not on free fatty acids, and accepts as substrates a wide range of alpha-methylacyl-CoAs, including pristanoyl-CoA, trihydroxycoprostanoyl-CoA (an intermediate in bile acid synthesis), and arylpropionic acids like the anti-inflammatory drug ibuprofen (2-(4-isobutylphenyl)propionic acid) but neither 3-methyl-branched nor linear-chain acyl-CoAs. The chain is Alpha-methylacyl-CoA racemase (Amacr) from Mus musculus (Mouse).